We begin with the raw amino-acid sequence, 675 residues long: Collagen alpha-3(IX) chain (675 aa).

Positions 1 to 21 are cleaved as a signal peptide; it reads MTVFPTLGLLFLCQLLATTSA. Disordered stretches follow at residues 22-517 and 542-660; these read QRVG…KEAS and KPLS…ICDT. Residues 25-515 form a triple-helical region 3 (COL3) region; that stretch reads GPQGPPGPRG…TGKPGPPGKE (491 aa). Pro residues-rich tracts occupy residues 27–38 and 51–60; these read QGPPGPRGPPGP and SGLPGPPGPK. Residues 62-87 show a composition bias toward low complexity; that stretch reads APGKPGAAGEAGLPGLPGVDGLTGTD. Residues 105–125 are compositionally biased toward pro residues; sequence AGPPGPAGKGLPGPPGPPGPS. Gly residues predominate over residues 126–135; sequence GLPGGNGFRG. 2 stretches are compositionally biased toward pro residues: residues 136 to 155 and 173 to 184; these read PPGP…PGPP and LCPPGPPGPPGM. A compositionally biased stretch (low complexity) spans 218–233; it reads PGSVGLQGPRGLRGLP. The short motif at 242 to 244 is the Cell attachment site element; it reads RGD. Basic and acidic residues predominate over residues 301–317; it reads KDGRDGAPGLDGEKGDA. Over residues 361 to 374 the composition is skewed to low complexity; that stretch reads EPGIPGDVGIPGDR. Residue Asn-479 is glycosylated (N-linked (GlcNAc...) asparagine). Positions 481 to 508 are enriched in low complexity; sequence TAGAPGIPGHPGPMGHQGEQGVPGITGK. Residues 516-546 are nonhelical region 3 (NC3); the sequence is ASEQHIRELCGEMINDQIAQLAANLRKPLSP. Residues 547-626 form a triple-helical region 2 (COL2) region; that stretch reads GMTGRPGPAG…QGLPGVPGIS (80 aa). The segment covering 569 to 582 has biased composition (low complexity); the sequence is HPGARGPPGYRGPT. Positions 591 to 593 match the Cell attachment site motif; it reads RGD. Over residues 613–624 the composition is skewed to low complexity; the sequence is DQGPQGLPGVPG. Residues 627–631 form a nonhelical region 2 (NC2) region; it reads KNGRD. The interval 632-658 is triple-helical region 1 (COL1); the sequence is GAQGEPGLPGDPGTPGAVGAQGTPGIC. Residues 659-675 are nonhelical region 1 (NC1); sequence DTSACMGAVGASTSKKS.

It belongs to the fibril-associated collagens with interrupted helices (FACIT) family. Trimers composed of three different chains: alpha 1(IX), alpha 2(IX), and alpha 3(IX). Post-translationally, prolines at the third position of the tripeptide repeating unit (G-X-Y) are hydroxylated in some or all of the chains.

It is found in the secreted. It localises to the extracellular space. The protein resides in the extracellular matrix. Functionally, collagen type IX is a minor cartilage non-fibrillar collagen. It is associated with type II collagen fibrils. The chain is Collagen alpha-3(IX) chain (COL9A3) from Gallus gallus (Chicken).